Reading from the N-terminus, the 121-residue chain is Apoptin (121 aa).

Disordered stretches follow at residues 1 to 28 and 57 to 95; these read MNAH…LETP and LRSA…PSEY. The span at 58–70 shows a compositional bias: polar residues; it reads RSATADNSENTGF.

The protein belongs to the gyrovirus apoptin family.

It localises to the host nucleus. Functionally, may act as transcriptional regulator. Induces apoptosis in infected cells. Element of infectious replication cycle. This chain is Apoptin (VP3), found in Gallus gallus (Chicken).